The sequence spans 472 residues: WAS protein family homolog DDB_G0292878 (472 aa).

The tract at residues 279-472 is disordered; that stretch reads LPTYDNSNSG…ESDTDSSEWE (194 aa). The span at 282-299 shows a compositional bias: polar residues; it reads YDNSNSGSAPVNQSSGGD. A compositionally biased stretch (low complexity) spans 300-314; the sequence is NNVNNNNNNNNSNNS. Over residues 320-356 the composition is skewed to pro residues; sequence PPQPTNAPPPPPPPPQSANAPPPPPPPPVSAPPPFNP. Over residues 363-373 the composition is skewed to acidic residues; it reads NDDDDDDDDDN. Over residues 374–383 the composition is skewed to gly residues; the sequence is GGGGGPGGAI. In terms of domain architecture, WH2 spans 382-401; the sequence is AIGDLLADIRRGHKNRLKKA. The segment covering 457-472 has biased composition (acidic residues); it reads TDDQDGESDTDSSEWE.

This sequence belongs to the WASH1 family.

In terms of biological role, acts as a nucleation-promoting factor by activating the Arp2/3 complex to induce actin polymerization. This Dictyostelium discoideum (Social amoeba) protein is WAS protein family homolog DDB_G0292878.